We begin with the raw amino-acid sequence, 332 residues long: UDP-galactose/UDP-glucose transporter 1 (332 aa).

8 helical membrane-spanning segments follow: residues 11-31 (ILLL…QGVL), 49-69 (HLAF…YIMI), 80-100 (APWW…AMGI), 112-132 (VLAK…VYGI), 135-155 (TFPE…FALL), 206-226 (IMLG…FGLP), 252-272 (ICGA…GSLA), and 301-317 (WGCV…QIYL). A Di-lysine motif motif is present at residues 327-332 (KKKQKS).

It belongs to the nucleotide-sugar transporter family. UDP-galactose:UMP antiporter (TC 2.A.7.11) subfamily.

It localises to the endoplasmic reticulum membrane. In terms of biological role, essential sugar transporter required for the transport of UDP-galactose and UDP-glucose from the cytoplasm into the Golgi and the endoplasmic reticulum, to ensure quality control of protein folding. Essential for pollen development and involved in embryo sac progress. This is UDP-galactose/UDP-glucose transporter 1 from Arabidopsis thaliana (Mouse-ear cress).